A 276-amino-acid polypeptide reads, in one-letter code: Urease accessory protein UreD (276 aa).

Belongs to the UreD family. As to quaternary structure, ureD, UreF and UreG form a complex that acts as a GTP-hydrolysis-dependent molecular chaperone, activating the urease apoprotein by helping to assemble the nickel containing metallocenter of UreC. The UreE protein probably delivers the nickel.

The protein resides in the cytoplasm. Functionally, required for maturation of urease via the functional incorporation of the urease nickel metallocenter. In Paracidovorax citrulli (strain AAC00-1) (Acidovorax citrulli), this protein is Urease accessory protein UreD.